Consider the following 943-residue polypeptide: Isoleucine--tRNA ligase (943 aa).

The short motif at 58-68 (PYANGSIHIGH) is the 'HIGH' region element. Residue Glu567 coordinates L-isoleucyl-5'-AMP. Positions 608–612 (KMSKS) match the 'KMSKS' region motif. ATP is bound at residue Lys611. Positions 906, 909, 926, and 929 each coordinate Zn(2+).

Belongs to the class-I aminoacyl-tRNA synthetase family. IleS type 1 subfamily. In terms of assembly, monomer. Requires Zn(2+) as cofactor.

The protein localises to the cytoplasm. The catalysed reaction is tRNA(Ile) + L-isoleucine + ATP = L-isoleucyl-tRNA(Ile) + AMP + diphosphate. Its function is as follows. Catalyzes the attachment of isoleucine to tRNA(Ile). As IleRS can inadvertently accommodate and process structurally similar amino acids such as valine, to avoid such errors it has two additional distinct tRNA(Ile)-dependent editing activities. One activity is designated as 'pretransfer' editing and involves the hydrolysis of activated Val-AMP. The other activity is designated 'posttransfer' editing and involves deacylation of mischarged Val-tRNA(Ile). The protein is Isoleucine--tRNA ligase of Pseudomonas aeruginosa (strain UCBPP-PA14).